Reading from the N-terminus, the 217-residue chain is Pro-Pro endopeptidase (217 aa).

Residues 1-27 (MKWDKRVVALILAVMIVCPLFAAPAHA) form the signal peptide. Residues 30 to 216 (QSILDKLVVL…TYEFMAKLFA (187 aa)) form the ATLF-like domain. The interval 112–115 (SERV) is plays a crucial role in substrate specificity. His-137 lines the Zn(2+) pocket. Glu-138 functions as the Proton acceptor in the catalytic mechanism. His-141, Tyr-174, and Glu-181 together coordinate Zn(2+).

This sequence belongs to the peptidase M34 family. Pro-Pro endopeptidase subfamily. Monomer. The cofactor is Zn(2+).

The protein resides in the secreted. The catalysed reaction is The enzyme catalyzes the hydrolytic cleavage of peptide bonds between two proline residues.. In terms of biological role, zinc-dependent endoprotease with a unique preference for proline residues surrounding the scissile bond, which cleaves in a PLP-|-PVP motif. Cleaves the cell surface protein encoded by an adjacent gene, which contains two PPEP-2 cleaving sites and putative extracellular matrix-binding domains. Thereby, may have a role in the regulation of P.alvei adhesion. Is not able to cleave within the PVP-|-PVQ motif, and only shows a very poor cleavage of the VNP-|-PVP motif in vitro, which is the optimal substrate peptide for PPEP-1 from P.difficile. The sequence is that of Pro-Pro endopeptidase from Paenibacillus alvei (strain ATCC 6344 / DSM 29 / NBRC 3343 / NCIMB 9371 / NCTC 6352) (Bacillus alvei).